The sequence spans 179 residues: MSRLTIYADSTPDAPLLRTEDPERIAQELSSIGVRFERWSSAVTPSPDDDEATILAAYRPYLNALMGETGAGTADVIRLRPDTPNLPALRQKFLSEHTHTEDEVRFFVHGSGNFILHVDDRVYDAHCTQGDLISVPTGIKHWFDAGETPFVTALRVFTDTTGWVAHYTGDPIADHFPAA.

Residues His97, His99, Glu103, and His141 each contribute to the Fe(2+) site. Residues His97, His99, Glu103, and His141 each coordinate Ni(2+).

It belongs to the acireductone dioxygenase (ARD) family. As to quaternary structure, monomer. Requires Fe(2+) as cofactor. Ni(2+) is required as a cofactor.

It catalyses the reaction 1,2-dihydroxy-5-(methylsulfanyl)pent-1-en-3-one + O2 = 3-(methylsulfanyl)propanoate + CO + formate + 2 H(+). It carries out the reaction 1,2-dihydroxy-5-(methylsulfanyl)pent-1-en-3-one + O2 = 4-methylsulfanyl-2-oxobutanoate + formate + 2 H(+). Its pathway is amino-acid biosynthesis; L-methionine biosynthesis via salvage pathway; L-methionine from S-methyl-5-thio-alpha-D-ribose 1-phosphate: step 5/6. In terms of biological role, catalyzes 2 different reactions between oxygen and the acireductone 1,2-dihydroxy-3-keto-5-methylthiopentene (DHK-MTPene) depending upon the metal bound in the active site. Fe-containing acireductone dioxygenase (Fe-ARD) produces formate and 2-keto-4-methylthiobutyrate (KMTB), the alpha-ketoacid precursor of methionine in the methionine recycle pathway. Ni-containing acireductone dioxygenase (Ni-ARD) produces methylthiopropionate, carbon monoxide and formate, and does not lie on the methionine recycle pathway. The chain is Acireductone dioxygenase from Granulibacter bethesdensis (strain ATCC BAA-1260 / CGDNIH1).